The following is a 391-amino-acid chain: 3-ketoacyl-CoA thiolase (391 aa).

The active-site Acyl-thioester intermediate is the cysteine 95. Residues histidine 347 and cysteine 377 each act as proton acceptor in the active site.

It belongs to the thiolase-like superfamily. Thiolase family. In terms of assembly, heterotetramer of two alpha chains (FadB) and two beta chains (FadA).

It localises to the cytoplasm. The enzyme catalyses an acyl-CoA + acetyl-CoA = a 3-oxoacyl-CoA + CoA. Its pathway is lipid metabolism; fatty acid beta-oxidation. Catalyzes the final step of fatty acid oxidation in which acetyl-CoA is released and the CoA ester of a fatty acid two carbons shorter is formed. This chain is 3-ketoacyl-CoA thiolase, found in Pseudomonas fluorescens (strain Pf0-1).